We begin with the raw amino-acid sequence, 500 residues long: L-2-amino-4-chloropent-4-enoate dechlorinase/desaturase (500 aa).

K311 bears the N6-(pyridoxal phosphate)lysine mark.

Belongs to the trans-sulfuration enzymes family. Pyridoxal 5'-phosphate is required as a cofactor.

It carries out the reaction L-2-amino-4-chloropent-4-enoate = L-propargylglycine + chloride + H(+). Its pathway is amino-acid metabolism. The protein operates within antibiotic biosynthesis. In terms of biological role, involved in the biosynthesis of terminal alkyne-containing amino acids such as L-propargylglycine (Pra) and L-beta-ethynylserine, that are produced as antibiotics by S.cattleya. Catalyzes gamma-elimination of chloride from 4-chloro-allyl-L-glycine (also named L-2-amino-4-chloropent-4-enoate), followed by an isomerization, to form the terminal-alkyne product L-propargylglycine. The sequence is that of L-2-amino-4-chloropent-4-enoate dechlorinase/desaturase from Streptantibioticus cattleyicolor (strain ATCC 35852 / DSM 46488 / JCM 4925 / NBRC 14057 / NRRL 8057) (Streptomyces cattleya).